We begin with the raw amino-acid sequence, 256 residues long: Ethylene-responsive transcription factor ERF084 (256 aa).

The AP2/ERF DNA-binding region spans 115–172 (GFMGVRKRPWGRWSAEIRDRIGRCRHWLGTFDTAEEAARAYDAAARRLRGTKAKTNFV).

Belongs to the AP2/ERF transcription factor family. ERF subfamily.

It is found in the nucleus. In terms of biological role, probably acts as a transcriptional activator. Binds to the GCC-box pathogenesis-related promoter element. May be involved in the regulation of gene expression by stress factors and by components of stress signal transduction pathways. This Arabidopsis thaliana (Mouse-ear cress) protein is Ethylene-responsive transcription factor ERF084 (ERF084).